Reading from the N-terminus, the 617-residue chain is 1-deoxy-D-xylulose-5-phosphate synthase (617 aa).

Thiamine diphosphate-binding positions include His-77 and 118–120 (GHS). Asp-149 contacts Mg(2+). Residues 150 to 151 (GA), Asn-178, Tyr-287, and Glu-368 each bind thiamine diphosphate. Asn-178 is a Mg(2+) binding site.

This sequence belongs to the transketolase family. DXPS subfamily. As to quaternary structure, homodimer. It depends on Mg(2+) as a cofactor. Thiamine diphosphate serves as cofactor.

The catalysed reaction is D-glyceraldehyde 3-phosphate + pyruvate + H(+) = 1-deoxy-D-xylulose 5-phosphate + CO2. It participates in metabolic intermediate biosynthesis; 1-deoxy-D-xylulose 5-phosphate biosynthesis; 1-deoxy-D-xylulose 5-phosphate from D-glyceraldehyde 3-phosphate and pyruvate: step 1/1. Functionally, catalyzes the acyloin condensation reaction between C atoms 2 and 3 of pyruvate and glyceraldehyde 3-phosphate to yield 1-deoxy-D-xylulose-5-phosphate (DXP). The protein is 1-deoxy-D-xylulose-5-phosphate synthase of Haemophilus ducreyi (strain 35000HP / ATCC 700724).